Consider the following 304-residue polypeptide: MAPGSVSSVSSSSFPSRDTSPSGSCGLPGADKPGPSCRRIQAGQRNPTMLHMVLEALKAREARQGTSVVAIKVYIQHKYPTVDTTRFKYLLKQALETGVRRGLLTRPAHSKAKGATGSFKLVPKPKTKKACAPKAGRGAAGAKETGSKKSGLLKKDQVGKATMEKGQKRRAYPCKAATLEMAPKKAKAKPKEVRKAPLKQDKAAGAPLTANGGQKVKRSGSRQEANAHGKTKGEKSKPLASKVQNSVASLAKRKMADMAHTVTVVQGAETVQETKVPTPSQDIGHKVQPIPRVRKAKTPENTQA.

Residues 1-24 show a composition bias toward low complexity; it reads MAPGSVSSVSSSSFPSRDTSPSGS. Disordered regions lie at residues 1–38, 110–248, and 270–304; these read MAPG…PSCR, SKAK…NSVA, and TVQE…NTQA. In terms of domain architecture, H15 spans 45–123; that stretch reads RNPTMLHMVL…GATGSFKLVP (79 aa). Residues 132–144 are compositionally biased toward low complexity; that stretch reads APKAGRGAAGAKE. Basic and acidic residues-rich tracts occupy residues 153 to 166, 189 to 202, and 225 to 237; these read LKKD…MEKG, KPKE…KQDK, and ANAH…EKSK. Positions 154 to 170 match the Nuclear localization signal motif; it reads KKDQVGKATMEKGQKRR. Polar residues predominate over residues 270–281; sequence TVQETKVPTPSQ.

Belongs to the histone H1/H5 family. As to expression, oocyte-specific.

The protein localises to the cytoplasm. Its subcellular location is the nucleus. It localises to the chromosome. In terms of biological role, may play a key role in the control of gene expression during oogenesis and early embryogenesis, presumably through the perturbation of chromatin structure. Essential for meiotic maturation of germinal vesicle-stage oocytes. The somatic type linker histone H1c is rapidly replaced by H1oo in a donor nucleus transplanted into an oocyte. The greater mobility of H1oo as compared to H1c may contribute to this rapid replacement and increased instability of the embryonic chromatin structure. The rapid replacement of H1c with H1oo may play an important role in nuclear remodeling. This is Histone H1.8 from Mus musculus (Mouse).